We begin with the raw amino-acid sequence, 1237 residues long: MEQRQYILDLVRRELTDTPQTQDLQKLTERIISLEKTITQLGTLLLGPNSTTAHEVSSLATAMQKVLYYNRAKAAISDFIMAIPRYPLYSYYGNDDIDDYHLAVVNRKPILPQFRYLGLMFGKPATGIQPYNFEVSFNLSKVEQTLISELAPTESQVIEDMRRDSTMLLKAEGRYDKSLNVFTVLITIITSNKLIYSQRLNIPGHRVASFELMIIANAVHTTVFEPAKVTKLPSCELGTSSIMSTTFEIRVQDMSTLPSPAFHARTIQSIKKTWRNADFSTGQLSAEDATYEPKMSGAEDVVIPHVYGLAESCEILTISDVYESVYNFESLCYCYSKKSGMEMAVRMMMLALELMRDDYKQVNSIYDVDHQTSESVGILAGITEGLLANAKAIALLVKHAVLSEELQINLNSIEQSYSRLVPLVPIYVTFDHVGTYSKGDAPIRDEPFSLTGLQLPMFAEGLSNSTIKTKFKSTWSVEPNVFGADHTIDCYESDDFIVLLKPKFAYWDHRYSHQPVSAVSYSDRGKSRTSYVLDCASSYNEESSLGYTSLFLAGRKAASPCALVNIPLNRSVKFESVSFLITSKRSVLPISGENLFGEIDMYIGRVRGTLNCNKFTSTEYIDRDGYKRYGLIGKCTGGSLLNASLSPLWVRLFCGGHKNADQIRFIGFSRTPVVGTLSGESLEVYPMPGSIGSSGTLSQSGRMSIYNDVTSLEVTLSVRHEASLETANVYAQSEIPGAALSTEIRDYIRQQNLYYSDLGLREEEAMIQGAVVMRTTFRGKLYVTKGTDSIPQSVYVWNTQLNDLAVAVKMTADLANAAEIRSKENQFRLNEMEQAVREIENQLLLSGIIDGLAALTGPATPVVKKAASLVFGAMKNMSRSGFRILAAGLTNSYFKTVMTHFLGTRKGVEVWRGLGSACAESSVMIKMSGKTKPIVKEGSTDLFLADKNFILADPIEFAKHNISTKYGGNVEQIGNVVSDSERLAVGGDLGSHVVTVFHRPLSILPEPLRTLLFKLSTSGLSKRDLSAREAWIRQTLHPTHSYATISYDYVLPKTGGNRRVLCFAGVGDPNPYNLPTGDKNVGIGSYMVEFDIIGLDKDTGVKVMRPVPWKQCGYTEEQVWSIYKTLGKEYRKVELKPYTVEDAWRVIAKSSHKRVLSDKAIISTPISYERQRAIEYMLSSHGFDYNLVLNNCQDFTRGLFDYARGGPVPDFIENDVRIAMIHSTSRHFAEVCSWVGV.

One can recognise a PPPDE domain in the interval 1006–1222 (EPLRTLLFKL…ENDVRIAMIH (217 aa)). Residues His-1040 and Cys-1192 contribute to the active site.

Its subcellular location is the virion. The polypeptide is Structural protein VP1 (Rice ragged stunt virus (isolate Thailand) (RRSV)).